A 370-amino-acid polypeptide reads, in one-letter code: 3-isopropylmalate dehydrogenase (370 aa).

77 to 90 (GPKWDSVPYEVRPE) contacts NAD(+). Substrate-binding residues include Arg97, Arg107, Arg135, and Asp226. Mg(2+)-binding residues include Asp226, Asp250, and Asp254. 290-302 (GSAPDIAGKGIAN) contacts NAD(+).

This sequence belongs to the isocitrate and isopropylmalate dehydrogenases family. LeuB type 1 subfamily. As to quaternary structure, homodimer. Mg(2+) is required as a cofactor. It depends on Mn(2+) as a cofactor.

It localises to the cytoplasm. It catalyses the reaction (2R,3S)-3-isopropylmalate + NAD(+) = 4-methyl-2-oxopentanoate + CO2 + NADH. It participates in amino-acid biosynthesis; L-leucine biosynthesis; L-leucine from 3-methyl-2-oxobutanoate: step 3/4. Its function is as follows. Catalyzes the oxidation of 3-carboxy-2-hydroxy-4-methylpentanoate (3-isopropylmalate) to 3-carboxy-4-methyl-2-oxopentanoate. The product decarboxylates to 4-methyl-2 oxopentanoate. The protein is 3-isopropylmalate dehydrogenase of Rhizobium johnstonii (strain DSM 114642 / LMG 32736 / 3841) (Rhizobium leguminosarum bv. viciae).